The chain runs to 953 residues: UvrABC system protein A (953 aa).

33 to 40 (GLSGSGKS) lines the ATP pocket. ABC transporter domains follow at residues 320–599 (WGST…EESI) and 619–949 (GHDN…RYLK). 652-659 (GVSGSGKS) contacts ATP. The C4-type zinc-finger motif lies at 752 to 778 (CEACQGDGLIKIEMHFLPDVYVKCDIC).

This sequence belongs to the ABC transporter superfamily. UvrA family. Forms a heterotetramer with UvrB during the search for lesions.

It is found in the cytoplasm. In terms of biological role, the UvrABC repair system catalyzes the recognition and processing of DNA lesions. UvrA is an ATPase and a DNA-binding protein. A damage recognition complex composed of 2 UvrA and 2 UvrB subunits scans DNA for abnormalities. When the presence of a lesion has been verified by UvrB, the UvrA molecules dissociate. The sequence is that of UvrABC system protein A from Rickettsia prowazekii (strain Madrid E).